Here is a 173-residue protein sequence, read N- to C-terminus: Probable transcription termination protein NusA (173 aa).

The region spanning 31–97 is the KH domain; that stretch reads DEKIVFVVKE…EDVWVKKFGN (67 aa). Positions 147-162 are enriched in basic and acidic residues; that stretch reads ADNRPKKDEIPEKAAE. Positions 147–173 are disordered; the sequence is ADNRPKKDEIPEKAAESSENVQAEENQ. Residues 163–173 are compositionally biased toward polar residues; it reads SSENVQAEENQ.

It belongs to the NusA family.

The protein resides in the cytoplasm. Functionally, participates in transcription termination. This is Probable transcription termination protein NusA from Methanococcus vannielii (strain ATCC 35089 / DSM 1224 / JCM 13029 / OCM 148 / SB).